We begin with the raw amino-acid sequence, 252 residues long: Probable phosphatase SO_1652 (252 aa).

The Zn(2+) site is built by H8, H10, H16, H41, E74, H102, H132, D193, and H195.

It belongs to the PHP family. Requires Zn(2+) as cofactor.

The protein is Probable phosphatase SO_1652 of Shewanella oneidensis (strain ATCC 700550 / JCM 31522 / CIP 106686 / LMG 19005 / NCIMB 14063 / MR-1).